The following is a 643-amino-acid chain: Phosphomethylpyrimidine synthase (643 aa).

Residues Asn-248, Met-277, Tyr-306, His-342, 362–364, 403–406, and Glu-442 contribute to the substrate site; these read SRG and DGLR. His-446 is a binding site for Zn(2+). Residue Tyr-469 participates in substrate binding. Zn(2+) is bound at residue His-510. The [4Fe-4S] cluster site is built by Cys-590, Cys-593, and Cys-598.

It belongs to the ThiC family. Homodimer. The cofactor is [4Fe-4S] cluster.

The catalysed reaction is 5-amino-1-(5-phospho-beta-D-ribosyl)imidazole + S-adenosyl-L-methionine = 4-amino-2-methyl-5-(phosphooxymethyl)pyrimidine + CO + 5'-deoxyadenosine + formate + L-methionine + 3 H(+). Its pathway is cofactor biosynthesis; thiamine diphosphate biosynthesis. In terms of biological role, catalyzes the synthesis of the hydroxymethylpyrimidine phosphate (HMP-P) moiety of thiamine from aminoimidazole ribotide (AIR) in a radical S-adenosyl-L-methionine (SAM)-dependent reaction. The chain is Phosphomethylpyrimidine synthase from Burkholderia mallei (strain NCTC 10247).